Reading from the N-terminus, the 286-residue chain is Type II restriction enzyme NgoMIV (286 aa).

Residues aspartate 140 and cysteine 186 each coordinate Mg(2+).

In terms of assembly, homotetramer. Requires Mg(2+) as cofactor.

The enzyme catalyses Endonucleolytic cleavage of DNA to give specific double-stranded fragments with terminal 5'-phosphates.. In terms of biological role, a P subtype restriction enzyme that recognizes the double-stranded sequence 5'-GCCGGC-3' and cleaves after G-1. The chain is Type II restriction enzyme NgoMIV (ngoMIVR) from Neisseria gonorrhoeae.